The following is a 260-amino-acid chain: Trialysin (260 aa).

An N-terminal signal peptide occupies residues 1-19 (MSKFWLLLLLVAAFQFAHS). Residues 20–55 (YPAAEYELDETTNDEVRQFIGDGYFEDEGDDGDEER) constitute a propeptide, removed in mature form, probably by the serine protease triapsin.

It belongs to the redulysin-like family. In terms of tissue distribution, expressed in salivary glands.

It is found in the secreted. Its subcellular location is the target cell membrane. Functionally, pore-forming protein that induces lysis of T.cruzi trypomastigotes, bacteria E.coli and human red blood cells. The parasite lysis is much more important than the hemolysis, probably due to difference in membrane composition. Its action on protozoan parasites and bacteria may indicate a role in the control of microorganism growth in the salivary glands. The polypeptide is Trialysin (Triatoma infestans (Assassin bug)).